A 441-amino-acid polypeptide reads, in one-letter code: MLLPGRARQPPTPQPVQHPGLRRQVEPPGQLLRLFYCTVLVCSKEISALTDFSGYLTKLLQNHTTYACDGDYLNLQCPRHSTISVQSAFYGQDYQMCSSQKPASQREDSLTCVAATTFQKVLDECQNQRACHLLVNSRVFGPDLCPGSSKYLLVSFKCQPNELKNKTVCEDQELKLHCHESKFLNIYSATYGRRTQERDICSSKAERLPPFDCLSYSALQVLSRRCYGKQRCKIIVNNHHFGSPCLPGVKKYLTVTYACVPKNILTAIDPAIANLKPSLKQKDGEYGINFDPSGSKVLRKDGILVSNSLAAFAYIRAHPERAALLFVSSVCIGLALTLCALVIRESCAKDFRDLQLGREQLVPGSDKVEEDSEDEEEEEDPSESDFPGELSGFCRTSYPIYSSIEAAELAERIERREQIIQEIWMNSGLDTSLPRNMGQFY.

The tract at residues 1–23 is disordered; it reads MLLPGRARQPPTPQPVQHPGLRR. Positions 1-48 are cleaved as a signal peptide; it reads MLLPGRARQPPTPQPVQHPGLRRQVEPPGQLLRLFYCTVLVCSKEISA. The Extracellular portion of the chain corresponds to 49-322; the sequence is LTDFSGYLTK…AYIRAHPERA (274 aa). Asn62 carries N-linked (GlcNAc...) asparagine glycosylation. One can recognise an SUEL-type lectin 1 domain in the interval 67–159; it reads ACDGDYLNLQ…KYLLVSFKCQ (93 aa). Asn165 carries N-linked (GlcNAc...) asparagine glycosylation. Residues 168-260 enclose the SUEL-type lectin 2 domain; the sequence is VCEDQELKLH…KYLTVTYACV (93 aa). The chain crosses the membrane as a helical span at residues 323–343; sequence ALLFVSSVCIGLALTLCALVI. Residues 344–441 lie on the Cytoplasmic side of the membrane; that stretch reads RESCAKDFRD…SLPRNMGQFY (98 aa). A disordered region spans residues 362-390; the sequence is VPGSDKVEEDSEDEEEEEDPSESDFPGEL. Residues 368–383 are compositionally biased toward acidic residues; sequence VEEDSEDEEEEEDPSE.

Belongs to the EVA1 family. As to expression, ubiquitous.

Its subcellular location is the membrane. Binds heparin. This Homo sapiens (Human) protein is Protein eva-1 homolog C (EVA1C).